Here is a 211-residue protein sequence, read N- to C-terminus: Mitotic spindle assembly checkpoint protein MAD2B (211 aa).

In terms of domain architecture, HORMA spans Gln13–Val203.

As to quaternary structure, homooligomer. Interacts with rev1. Interacts with rev3l. Interacts with fzr1 (in complex with the anaphase promoting complex APC). May interact with cdc20.

It is found in the nucleus. It localises to the cytoplasm. The protein localises to the cytoskeleton. The protein resides in the spindle. Functionally, adapter protein able to interact with different proteins and involved in different biological processes. Mediates the interaction between the error-prone DNA polymerase zeta catalytic subunit rev3l and the inserter polymerase rev1, thereby mediating the second polymerase switching in translesion DNA synthesis. Translesion DNA synthesis releases the replication blockade of replicative polymerases, stalled in presence of DNA lesions. May also play a role in signal transduction in response to DNA damage. May regulate the activation of the anaphase promoting complex APC thereby regulating progression through the cell cycle. Through transcriptional regulation may play a role in epithelial-mesenchymal transdifferentiation. The chain is Mitotic spindle assembly checkpoint protein MAD2B (mad2l2) from Xenopus tropicalis (Western clawed frog).